Reading from the N-terminus, the 353-residue chain is Inactive ubiquitin thioesterase OTULINL (353 aa).

The required for membrane binding stretch occupies residues 1–80 (MKATRSAPRE…KWWIGYLQRK (80 aa)). One can recognise an OTU domain in the interval 125–353 (KCVRPVKRDN…NDHQYHIPVF (229 aa)).

It belongs to the peptidase C65 family. Otulin subfamily. In terms of assembly, does not bind ubiquitin or ubiquitin-like proteins.

The protein resides in the cytoplasm. Its subcellular location is the endoplasmic reticulum membrane. It localises to the nucleus envelope. Functionally, lacks deubiquitinase activity. The polypeptide is Inactive ubiquitin thioesterase OTULINL (Rattus norvegicus (Rat)).